A 344-amino-acid polypeptide reads, in one-letter code: Dihydroorotase (344 aa).

Positions 13 and 15 each coordinate Zn(2+). Substrate-binding positions include His-15–Arg-17 and Asn-41. Zn(2+) contacts are provided by Lys-98, His-135, and His-173. Lys-98 carries the N6-carboxylysine modification. Position 135 (His-135) interacts with substrate. A substrate-binding site is contributed by Leu-218. Position 247 (Asp-247) interacts with Zn(2+). Asp-247 is an active-site residue. Substrate contacts are provided by His-251 and Ala-263.

The protein belongs to the metallo-dependent hydrolases superfamily. DHOase family. Class II DHOase subfamily. As to quaternary structure, homodimer. Zn(2+) is required as a cofactor.

It carries out the reaction (S)-dihydroorotate + H2O = N-carbamoyl-L-aspartate + H(+). Its pathway is pyrimidine metabolism; UMP biosynthesis via de novo pathway; (S)-dihydroorotate from bicarbonate: step 3/3. Functionally, catalyzes the reversible cyclization of carbamoyl aspartate to dihydroorotate. This Neisseria meningitidis serogroup C / serotype 2a (strain ATCC 700532 / DSM 15464 / FAM18) protein is Dihydroorotase.